A 342-amino-acid chain; its full sequence is Nucleoid-associated protein Shewmr7_2293 (342 aa).

Belongs to the YejK family.

It localises to the cytoplasm. It is found in the nucleoid. This chain is Nucleoid-associated protein Shewmr7_2293, found in Shewanella sp. (strain MR-7).